The primary structure comprises 291 residues: Protein SpdB (291 aa).

3 helical membrane-spanning segments follow: residues 24–44 (VVVI…LVVG), 71–91 (ITGV…AHAL), and 99–119 (WLAV…HGLW).

Its subcellular location is the cell membrane. Its function is as follows. Involved in plasmid transfer. In Streptomyces lividans, this protein is Protein SpdB (spdB).